The chain runs to 98 residues: Protein translation factor SUI1 homolog (98 aa).

It belongs to the SUI1 family.

The chain is Protein translation factor SUI1 homolog from Pyrococcus furiosus (strain ATCC 43587 / DSM 3638 / JCM 8422 / Vc1).